Here is a 118-residue protein sequence, read N- to C-terminus: Large ribosomal subunit protein uL22 (118 aa).

Belongs to the universal ribosomal protein uL22 family. As to quaternary structure, part of the 50S ribosomal subunit.

This protein binds specifically to 23S rRNA; its binding is stimulated by other ribosomal proteins, e.g. L4, L17, and L20. It is important during the early stages of 50S assembly. It makes multiple contacts with different domains of the 23S rRNA in the assembled 50S subunit and ribosome. In terms of biological role, the globular domain of the protein is located near the polypeptide exit tunnel on the outside of the subunit, while an extended beta-hairpin is found that lines the wall of the exit tunnel in the center of the 70S ribosome. The chain is Large ribosomal subunit protein uL22 from Synechococcus sp. (strain RCC307).